We begin with the raw amino-acid sequence, 343 residues long: L-threonine 3-dehydrogenase (343 aa).

Residue cysteine 40 participates in Zn(2+) binding. Active-site charge relay system residues include threonine 42 and histidine 45. 6 residues coordinate Zn(2+): histidine 65, glutamate 66, cysteine 95, cysteine 98, cysteine 101, and cysteine 109. NAD(+)-binding positions include isoleucine 177, aspartate 197, arginine 202, 264–266 (LGI), and 288–289 (IY).

The protein belongs to the zinc-containing alcohol dehydrogenase family. Homotetramer. Zn(2+) serves as cofactor.

The protein localises to the cytoplasm. The enzyme catalyses L-threonine + NAD(+) = (2S)-2-amino-3-oxobutanoate + NADH + H(+). It participates in amino-acid degradation; L-threonine degradation via oxydo-reductase pathway; glycine from L-threonine: step 1/2. Functionally, catalyzes the NAD(+)-dependent oxidation of L-threonine to 2-amino-3-ketobutyrate. In Vibrio parahaemolyticus serotype O3:K6 (strain RIMD 2210633), this protein is L-threonine 3-dehydrogenase.